A 636-amino-acid polypeptide reads, in one-letter code: MKYEQLAKDIIQHVGGKENVISVVHCITRLRFKLKDEGKANTDVLKNMDGIVTVMKSGGQYQVVIGNHVPDVYKDVVEIGGFQNQAETETEDEKKYQGLFNKFIDIIASIFTPVLGVLAATGMIKGLNALFLSTGVLEEANGTYQLLHAIGDSLFYFFPIFLGYTAAKKFGATPFIGMAIGASLVYPTLVVLTEGEPLYTLFTGTIFESPVHITFLGIPVILMSYATSVIPIILAAYFASKVEARLRKIIPDVVKTFLVPFFTLLIVVPLTFIVIGPIATWAGQLLGQFTLWVYNLSPIIAGAFLGGFWQVFVIFGLHWGLIPIAINNLVVQGSDPVLAMVFAASFAQIGAVAAVWLKIKQQKVKTLSVPAFISGIFGVTEPAIYGVTLPLKRPFIISCIAAAVGGAIIGLFRSQGYIIGGLGIFGIPSFLHPADGMDAGFWGIVIAVVVAFVLGFILTYLFGLKSGNASDEQTETKAHTSTGTGEKEEISSPFNGSVITLSEIKDEAFSSGALGEGIAIEPSEGKLFSPVSGMVTALYPTHHALGITTDRGAELLIHIGLDTVQLDGKFFTAHTIQGAQVEKGDLLIEFDIKEIKAAGYAVTTPVIVTNHKQYGQLFLTDKQQVNAGDRLLELTR.

The PTS EIIB type-1 domain maps to 1 to 86 (MKYEQLAKDI…VEIGGFQNQA (86 aa)). Catalysis depends on cysteine 26, which acts as the Phosphocysteine intermediate; for EIIB activity. 10 consecutive transmembrane segments (helical) span residues 104 to 124 (IDII…TGMI), 146 to 166 (LLHA…GYTA), 172 to 192 (ATPF…LVVL), 215 to 235 (FLGI…IILA), 258 to 278 (LVPF…IGPI), 299 to 319 (IIAG…GLHW), 337 to 357 (VLAM…AVWL), 369 to 389 (VPAF…GVTL), 407 to 427 (AIIG…IFGI), and 444 to 464 (IVIA…LFGL). In terms of domain architecture, PTS EIIC type-1 spans 105–476 (DIIASIFTPV…GNASDEQTET (372 aa)). Residues 472 to 492 (EQTETKAHTSTGTGEKEEISS) are disordered. One can recognise a PTS EIIA type-1 domain in the interval 506 to 610 (DEAFSSGALG…AVTTPVIVTN (105 aa)). The active-site Tele-phosphohistidine intermediate; for EIIA activity is the histidine 558.

It localises to the cell membrane. In terms of biological role, the phosphoenolpyruvate-dependent sugar phosphotransferase system (sugar PTS), a major carbohydrate active -transport system, catalyzes the phosphorylation of incoming sugar substrates concomitantly with their translocation across the cell membrane. This system is involved in beta-glucoside transport. This chain is PTS system beta-glucoside-specific EIIBCA component (bglP), found in Halalkalibacterium halodurans (strain ATCC BAA-125 / DSM 18197 / FERM 7344 / JCM 9153 / C-125) (Bacillus halodurans).